We begin with the raw amino-acid sequence, 948 residues long: Zinc finger CCCH domain-containing protein 3 (948 aa).

Disordered stretches follow at residues 25-108, 121-219, 265-296, and 336-493; these read HGNA…VPQQ, QNVV…RRTV, VDAGHTDQPVPSGSVGGPARPASGPRQAREAS, and NVCK…LKKT. Over residues 56–74 the composition is skewed to basic residues; that stretch reads RPSRRGYSSHHGPSWRKKY. Over residues 128-141 the composition is skewed to low complexity; the sequence is KPPSKSGSASASGA. Residues 157–166 show a composition bias toward basic and acidic residues; that stretch reads QRPREGEGEP. Residues 372–398 show a composition bias toward low complexity; it reads SAPSKYKWKASSPSASSSSSFRWQSEA. Over residues 405–415 the composition is skewed to polar residues; it reads SQLSPVLSRSP. Position 408 is a phosphoserine (Ser408). Over residues 441 to 452 the composition is skewed to basic residues; that stretch reads VKSRTKIIRRRS. C3H1-type zinc fingers lie at residues 667–695, 699–722, 723–749, 750–777, and 778–800; these read EKRKEYCMYYNRFGRCNRGERCPYIHDPE, VCTRFVRGTCKKTDGTCPFSHHVS, KEKMPVCSYFLKGICSNSNCPYSHVYV, SRKAEVCSDFLKGYCPLGAKCKKKHTLL, and CPDFARRGACPRGAQCQLLHRTQ. Disordered stretches follow at residues 798-891 and 913-948; these read RTQK…HEAP and ISLQSSPSPGAQPRVRAPRAPLTKDSGKPLHIKPRL. A compositionally biased stretch (polar residues) spans 834–846; it reads SASQRPTRQTPSS. Low complexity-rich tracts occupy residues 847–856 and 864–885; these read AALTAAAVAA and SASPSSSKASSSSSSSSSPPAS. Residues Ser918 and Ser920 each carry the phosphoserine modification.

As to quaternary structure, interacts with SMAD1, SMAD3, SMAD4, CPSF2 and CPSF3.

Its subcellular location is the nucleus. In terms of biological role, required for the export of polyadenylated mRNAs from the nucleus. Enhances ACVR1B-induced SMAD-dependent transcription. Binds to single-stranded DNA but not to double-stranded DNA in vitro. Involved in RNA cleavage. This Homo sapiens (Human) protein is Zinc finger CCCH domain-containing protein 3 (ZC3H3).